The sequence spans 330 residues: GTP 3',8-cyclase (330 aa).

The 212-residue stretch at 14–225 (RFGRTVDYVR…RERLADAYPE (212 aa)) folds into the Radical SAM core domain. Arg-23 serves as a coordination point for GTP. [4Fe-4S] cluster-binding residues include Cys-30 and Cys-34. Tyr-36 contributes to the S-adenosyl-L-methionine binding site. [4Fe-4S] cluster is bound at residue Cys-37. Arg-70 serves as a coordination point for GTP. Gly-74 serves as a coordination point for S-adenosyl-L-methionine. Position 101 (Thr-101) interacts with GTP. Ser-125 contributes to the S-adenosyl-L-methionine binding site. GTP is bound at residue Lys-162. Cys-259 and Cys-262 together coordinate [4Fe-4S] cluster. 264-266 (KLR) provides a ligand contact to GTP. Residue Cys-276 participates in [4Fe-4S] cluster binding. A compositionally biased stretch (basic and acidic residues) spans 309–318 (KPKDGLKSSH). The segment at 309 to 330 (KPKDGLKSSHDTAASSMSQIGG) is disordered. Positions 319–330 (DTAASSMSQIGG) are enriched in polar residues.

This sequence belongs to the radical SAM superfamily. MoaA family. Monomer and homodimer. [4Fe-4S] cluster serves as cofactor.

The catalysed reaction is GTP + AH2 + S-adenosyl-L-methionine = (8S)-3',8-cyclo-7,8-dihydroguanosine 5'-triphosphate + 5'-deoxyadenosine + L-methionine + A + H(+). It participates in cofactor biosynthesis; molybdopterin biosynthesis. In terms of biological role, catalyzes the cyclization of GTP to (8S)-3',8-cyclo-7,8-dihydroguanosine 5'-triphosphate. The protein is GTP 3',8-cyclase of Chlorobaculum tepidum (strain ATCC 49652 / DSM 12025 / NBRC 103806 / TLS) (Chlorobium tepidum).